The chain runs to 260 residues: Vaa serine proteinase homolog 1 (260 aa).

Positions 1–18 are cleaved as a signal peptide; that stretch reads MVLIRVLANLLVLQLSYA. Positions 19 to 24 are excised as a propeptide; it reads QKSSEL. Residues 25 to 251 form the Peptidase S1 domain; it reads VIGGDECNIN…YTDWIQSIIA (227 aa). 6 disulfide bridges follow: cysteine 31–cysteine 165, cysteine 52–cysteine 68, cysteine 100–cysteine 258, cysteine 144–cysteine 212, cysteine 176–cysteine 191, and cysteine 202–cysteine 227. Asparagine 123 carries an N-linked (GlcNAc...) asparagine glycan. The key residues for binding to FVIIIa stretch occupies residues 172 to 186; that stretch reads DYSVCQKVYRKLPEK. N-linked (GlcNAc...) asparagine glycosylation is present at asparagine 253.

The protein belongs to the peptidase S1 family. Snake venom subfamily. In terms of processing, N-glycosylated. The toxin exists in multiple glycoforms. Expressed by the venom gland.

The protein localises to the secreted. Its function is as follows. This is the first member of the serine protease family that has strong anticoagulant activity and lacks enzymatic activity. It inhibits activities of three blood coagulation complexes: (1) prothrombinase complex (composed of blood coagulation factors Va and Xa (F5 and F10)) (IC(50)=164.1 nM), (2) intrinsic tenase complex (composed of factors VIIIa and IXa (F8 and F9)), and (3) extrinsic tenase complex (composed of tissue factor and factor VIIa (F7)). The toxin also has been observed to bind prothrombin, factor FVa, non-activated and activated forms of factors FVII (F7) (FVII and FVIIa), factor FVIIIa (F8), factors FIX and FIXa (F9) and factors FX and FXa (F10). The toxin inhibits the activity of the intrinsic tenase complex mainly by competing with FIXa (F9) for binding to FVIIIa (F8). This Vipera ammodytes ammodytes (Western sand viper) protein is Vaa serine proteinase homolog 1.